The primary structure comprises 243 residues: ATP synthase subunit a (243 aa).

7 helical membrane-spanning segments follow: residues N29–L49, I54–I74, V89–F109, H114–F134, I144–F164, I182–L202, and I208–F228.

Belongs to the ATPase A chain family. As to quaternary structure, F-type ATPases have 2 components, CF(1) - the catalytic core - and CF(0) - the membrane proton channel. CF(1) has five subunits: alpha(3), beta(3), gamma(1), delta(1), epsilon(1). CF(0) has three main subunits: a(1), b(2) and c(9-12). The alpha and beta chains form an alternating ring which encloses part of the gamma chain. CF(1) is attached to CF(0) by a central stalk formed by the gamma and epsilon chains, while a peripheral stalk is formed by the delta and b chains.

It is found in the cell inner membrane. In terms of biological role, key component of the proton channel; it plays a direct role in the translocation of protons across the membrane. In Ehrlichia canis (strain Jake), this protein is ATP synthase subunit a.